A 376-amino-acid chain; its full sequence is Queuine tRNA-ribosyltransferase (376 aa).

The active-site Proton acceptor is aspartate 89. Substrate-binding positions include 89–93 (DSGGF), aspartate 143, glutamine 194, and glycine 221. The interval 252–258 (GVGIPSN) is RNA binding. Catalysis depends on aspartate 271, which acts as the Nucleophile. The RNA binding; important for wobble base 34 recognition stretch occupies residues 276-280 (ARNGR). Positions 309, 311, 314, and 340 each coordinate Zn(2+).

Belongs to the queuine tRNA-ribosyltransferase family. As to quaternary structure, homodimer. Within each dimer, one monomer is responsible for RNA recognition and catalysis, while the other monomer binds to the replacement base PreQ1. It depends on Zn(2+) as a cofactor.

The enzyme catalyses 7-aminomethyl-7-carbaguanine + guanosine(34) in tRNA = 7-aminomethyl-7-carbaguanosine(34) in tRNA + guanine. It participates in tRNA modification; tRNA-queuosine biosynthesis. In terms of biological role, catalyzes the base-exchange of a guanine (G) residue with the queuine precursor 7-aminomethyl-7-deazaguanine (PreQ1) at position 34 (anticodon wobble position) in tRNAs with GU(N) anticodons (tRNA-Asp, -Asn, -His and -Tyr). Catalysis occurs through a double-displacement mechanism. The nucleophile active site attacks the C1' of nucleotide 34 to detach the guanine base from the RNA, forming a covalent enzyme-RNA intermediate. The proton acceptor active site deprotonates the incoming PreQ1, allowing a nucleophilic attack on the C1' of the ribose to form the product. After dissociation, two additional enzymatic reactions on the tRNA convert PreQ1 to queuine (Q), resulting in the hypermodified nucleoside queuosine (7-(((4,5-cis-dihydroxy-2-cyclopenten-1-yl)amino)methyl)-7-deazaguanosine). The chain is Queuine tRNA-ribosyltransferase from Clostridium botulinum (strain Hall / ATCC 3502 / NCTC 13319 / Type A).